An 862-amino-acid chain; its full sequence is Valine--tRNA ligase (862 aa).

A 'HIGH' region motif is present at residues 43–53 (PNVTGSLHMGH). Zn(2+) contacts are provided by cysteine 176, cysteine 179, cysteine 344, cysteine 347, cysteine 417, cysteine 420, cysteine 438, and cysteine 441. Residues 528–532 (KMSKS) carry the 'KMSKS' region motif. Lysine 531 serves as a coordination point for ATP. Positions 802–862 (RRRQEKRLKE…RIREALSQIG (61 aa)) form a coiled coil.

It belongs to the class-I aminoacyl-tRNA synthetase family. ValS type 1 subfamily. In terms of assembly, monomer. Requires Zn(2+) as cofactor.

Its subcellular location is the cytoplasm. The enzyme catalyses tRNA(Val) + L-valine + ATP = L-valyl-tRNA(Val) + AMP + diphosphate. In terms of biological role, catalyzes the attachment of valine to tRNA(Val). As ValRS can inadvertently accommodate and process structurally similar amino acids such as threonine, to avoid such errors, it has a 'posttransfer' editing activity that hydrolyzes mischarged Thr-tRNA(Val) in a tRNA-dependent manner. The chain is Valine--tRNA ligase from Thermus thermophilus (strain ATCC BAA-163 / DSM 7039 / HB27).